The primary structure comprises 70 residues: Large ribosomal subunit protein uL29 (70 aa).

This sequence belongs to the universal ribosomal protein uL29 family.

The polypeptide is Large ribosomal subunit protein uL29 (Symbiobacterium thermophilum (strain DSM 24528 / JCM 14929 / IAM 14863 / T)).